The primary structure comprises 189 residues: MLNIVIFGAPGSGKGTQSERIVEKYGINHISTGDVLRAEIKNGTELGKTAKGYIDQGQLIPDELMVDILASVFDSFKDSKGVIFDGFPRTIPQAEALKVMLKERGQDISVMLDLDVPEEELMTRLIKRGKESGRADDNEETIKKRLVVYNTQTSPLKEYYKGEGKYQHINGLGTMEGIFEDICKAVDTL.

Residue 11-16 (GSGKGT) coordinates ATP. The NMP stretch occupies residues 31-60 (STGDVLRAEIKNGTELGKTAKGYIDQGQLI). AMP contacts are provided by residues T32, R37, 58–60 (QLI), 86–89 (GFPR), and Q93. The interval 127-137 (KRGKESGRADD) is LID. R128 lines the ATP pocket. 2 residues coordinate AMP: R134 and R145. Position 173 (G173) interacts with ATP.

The protein belongs to the adenylate kinase family. Monomer.

Its subcellular location is the cytoplasm. The catalysed reaction is AMP + ATP = 2 ADP. The protein operates within purine metabolism; AMP biosynthesis via salvage pathway; AMP from ADP: step 1/1. In terms of biological role, catalyzes the reversible transfer of the terminal phosphate group between ATP and AMP. Plays an important role in cellular energy homeostasis and in adenine nucleotide metabolism. This Bacteroides fragilis (strain ATCC 25285 / DSM 2151 / CCUG 4856 / JCM 11019 / LMG 10263 / NCTC 9343 / Onslow / VPI 2553 / EN-2) protein is Adenylate kinase.